A 412-amino-acid polypeptide reads, in one-letter code: L-cysteine:1D-myo-inositol 2-amino-2-deoxy-alpha-D-glucopyranoside ligase (412 aa).

Cys43 is a Zn(2+) binding site. Residues Cys43–Thr46, Thr58, and Asn81–Thr83 contribute to the L-cysteinyl-5'-AMP site. A 'HIGH' region motif is present at residues Ile45–His55. Residues Glu187 to Pro192 carry the 'ERGGDP' region motif. Trp227 contributes to the L-cysteinyl-5'-AMP binding site. Residue Cys231 coordinates Zn(2+). Gly249–Asp251 serves as a coordination point for L-cysteinyl-5'-AMP. Residue His256 participates in Zn(2+) binding. Ile283 contributes to the L-cysteinyl-5'-AMP binding site. Residues Lys289 to Ser293 carry the 'KMSKS' region motif.

Belongs to the class-I aminoacyl-tRNA synthetase family. MshC subfamily. As to quaternary structure, monomer. Zn(2+) serves as cofactor.

It catalyses the reaction 1D-myo-inositol 2-amino-2-deoxy-alpha-D-glucopyranoside + L-cysteine + ATP = 1D-myo-inositol 2-(L-cysteinylamino)-2-deoxy-alpha-D-glucopyranoside + AMP + diphosphate + H(+). Functionally, catalyzes the ATP-dependent condensation of GlcN-Ins and L-cysteine to form L-Cys-GlcN-Ins. The sequence is that of L-cysteine:1D-myo-inositol 2-amino-2-deoxy-alpha-D-glucopyranoside ligase (mshC) from Mycolicibacterium smegmatis (strain ATCC 700084 / mc(2)155) (Mycobacterium smegmatis).